The primary structure comprises 410 residues: Proteasome-activating nucleotidase (410 aa).

The stretch at 1 to 70 (MENNSQNVLK…LRGEIERFRT (70 aa)) forms a coiled coil. ATP-binding positions include 195 to 200 (GTGKTL) and H334. The interval 408–410 (MFG) is docks into pockets in the proteasome alpha-ring to cause gate opening.

This sequence belongs to the AAA ATPase family. In terms of assembly, homohexamer. The hexameric complex has a two-ring architecture resembling a top hat that caps the 20S proteasome core at one or both ends. Upon ATP-binding, the C-terminus of PAN interacts with the alpha-rings of the proteasome core by binding to the intersubunit pockets.

It localises to the cytoplasm. Its function is as follows. ATPase which is responsible for recognizing, binding, unfolding and translocation of substrate proteins into the archaeal 20S proteasome core particle. Is essential for opening the gate of the 20S proteasome via an interaction with its C-terminus, thereby allowing substrate entry and access to the site of proteolysis. Thus, the C-termini of the proteasomal ATPase function like a 'key in a lock' to induce gate opening and therefore regulate proteolysis. Unfolding activity requires energy from ATP hydrolysis, whereas ATP binding alone promotes ATPase-20S proteasome association which triggers gate opening, and supports translocation of unfolded substrates. This Methanothermobacter thermautotrophicus (strain ATCC 29096 / DSM 1053 / JCM 10044 / NBRC 100330 / Delta H) (Methanobacterium thermoautotrophicum) protein is Proteasome-activating nucleotidase.